The sequence spans 390 residues: GTPase Obg (390 aa).

One can recognise an Obg domain in the interval 1–159 (MKFVDEASIL…RELLLELMLL (159 aa)). Positions 127–147 (NTRFKSSVNRTPRQKTNGTPG) are disordered. Residues 129–145 (RFKSSVNRTPRQKTNGT) are compositionally biased toward polar residues. Residues 160–333 (ADVGMLGMPN…LCWDVMTFII (174 aa)) form the OBG-type G domain. Residues 166 to 173 (GMPNAGKS), 191 to 195 (FTTLV), 213 to 216 (DIPG), 283 to 286 (NKID), and 314 to 316 (SAA) each bind GTP. Mg(2+)-binding residues include Ser-173 and Thr-193.

Belongs to the TRAFAC class OBG-HflX-like GTPase superfamily. OBG GTPase family. Monomer. Mg(2+) serves as cofactor.

It localises to the cytoplasm. Functionally, an essential GTPase which binds GTP, GDP and possibly (p)ppGpp with moderate affinity, with high nucleotide exchange rates and a fairly low GTP hydrolysis rate. Plays a role in control of the cell cycle, stress response, ribosome biogenesis and in those bacteria that undergo differentiation, in morphogenesis control. The chain is GTPase Obg from Escherichia coli O7:K1 (strain IAI39 / ExPEC).